A 212-amino-acid chain; its full sequence is Thymidine kinase (212 aa).

ATP contacts are provided by residues 11 to 18 (SPMNAGKT), 43 to 45 (DTR), and 86 to 89 (DEAQ). Glu87 (proton acceptor) is an active-site residue. Substrate is bound at residue Phe119. Cys144, Cys147, Cys183, and Cys186 together coordinate Zn(2+).

It belongs to the thymidine kinase family.

The catalysed reaction is thymidine + ATP = dTMP + ADP + H(+). The sequence is that of Thymidine kinase (TK) from Encephalitozoon cuniculi (strain GB-M1) (Microsporidian parasite).